The chain runs to 552 residues: Scavenger receptor class B member 1 (552 aa).

Residues 1–11 (MGCSAKARWAA) lie on the Cytoplasmic side of the membrane. The helical transmembrane segment at 12-32 (GALGVAGLLCAVLGAVMIVMV) threads the bilayer. The Extracellular portion of the chain corresponds to 33–443 (PSLIKQQVLK…LVLMPKVMHY (411 aa)). Asparagine 102, asparagine 108, asparagine 173, asparagine 212, asparagine 227, asparagine 255, asparagine 310, asparagine 330, and asparagine 383 each carry an N-linked (GlcNAc...) asparagine glycan. Cysteine 251 and cysteine 384 are joined by a disulfide. Phosphoserine is present on residues tyrosine 393 and valine 458. Residues 444 to 464 (AQYVLLALGCVLLLVPVICQI) traverse the membrane as a helical segment. Cysteine 462 carries the S-palmitoyl cysteine lipid modification. At 465-552 (RSQVGAGQRA…GPSLGGGTGS (88 aa)) the chain is on the cytoplasmic side. Threonine 493 carries the phosphoserine modification.

Belongs to the CD36 family. As to quaternary structure, the C-terminal region binds to PDZK1. In terms of assembly, (Microbial infection) Interacts with hepatitis C virus E1:E2 glycoproteins. N-glycosylated. Post-translationally, the six cysteines of the extracellular domain are all involved in intramolecular disulfide bonds. As to expression, widely expressed.

The protein resides in the cell membrane. The protein localises to the membrane. It is found in the caveola. Receptor for different ligands such as phospholipids, cholesterol ester, lipoproteins, phosphatidylserine and apoptotic cells. Receptor for HDL, mediating selective uptake of cholesteryl ether and HDL-dependent cholesterol efflux. Also facilitates the flux of free and esterified cholesterol between the cell surface and apoB-containing lipoproteins and modified lipoproteins, although less efficiently than HDL. May be involved in the phagocytosis of apoptotic cells, via its phosphatidylserine binding activity. Functionally, (Microbial infection) Acts as a receptor for hepatitis C virus in hepatocytes and appears to facilitate its cell entry. Binding between SCARB1 and the hepatitis C virus glycoprotein E2 is independent of the genotype of the viral isolate. Its function is as follows. (Microbial infection) Mediates uptake of M.fortuitum, E.coli and S.aureus. In terms of biological role, (Microbial infection) Facilitates the entry of human coronavirus SARS-CoV-2 by acting as an entry cofactor through HDL binding. The sequence is that of Scavenger receptor class B member 1 (SCARB1) from Homo sapiens (Human).